A 430-amino-acid chain; its full sequence is MNTRATTAILVNQVVQKKCSLTALLSANKKNQSLIQELCYGTLRWYFKLKLIAEKLLHAPLRDKDHDIFCLILTGFYQLNYLNIPTHTIVNQTVGAAEILKKPWAKGLINKLLRRFIAEKDELLTFTEKTIEGQYAHPLWFIQHIKKAWPDHWESILIANNARPPMTLRVNLTKISREIYLEMLDQKNISAKPLDFLPAAIQLEKPCSVHQLPGFNEGYCYIQDAAGQFAAYLLKLENNQTVLDACAAPGSKTSHILEVNPHLKTLVAIDNNKQRLNRIKENITRLGLRQEHLQCLLADVSQIDQWSSGELFDRILLDAPCSATGVIRRHPDIKLLRQPGDISQYHQKKLQLLNALWTVLKAGGFLLYSTCSVLPDENEKVIEEFLSTHDKVELSPTNVHGGLQLKYGVQQLPGQDNKDGFYYSLLFKNP.

Residues 246–252 (CAAPGSK), Asp-270, Asp-299, and Asp-318 contribute to the S-adenosyl-L-methionine site. Cys-371 (nucleophile) is an active-site residue.

Belongs to the class I-like SAM-binding methyltransferase superfamily. RsmB/NOP family.

Its subcellular location is the cytoplasm. The catalysed reaction is cytidine(967) in 16S rRNA + S-adenosyl-L-methionine = 5-methylcytidine(967) in 16S rRNA + S-adenosyl-L-homocysteine + H(+). In terms of biological role, specifically methylates the cytosine at position 967 (m5C967) of 16S rRNA. In Coxiella burnetii (strain RSA 493 / Nine Mile phase I), this protein is Probable ribosomal RNA small subunit methyltransferase B.